The primary structure comprises 211 residues: LexA repressor (211 aa).

A DNA-binding region (H-T-H motif) is located at residues 27–47 (QTEIARAFGFKGVRAVQHHLD). Residues Ser-131 and Lys-168 each act as for autocatalytic cleavage activity in the active site.

The protein belongs to the peptidase S24 family. In terms of assembly, homodimer.

The catalysed reaction is Hydrolysis of Ala-|-Gly bond in repressor LexA.. Represses a number of genes involved in the response to DNA damage (SOS response), including recA and lexA. In the presence of single-stranded DNA, RecA interacts with LexA causing an autocatalytic cleavage which disrupts the DNA-binding part of LexA, leading to derepression of the SOS regulon and eventually DNA repair. The sequence is that of LexA repressor from Xylella fastidiosa (strain M23).